The sequence spans 827 residues: Cadherin-17 (827 aa).

The signal sequence occupies residues methionine 1–glycine 21. The Extracellular segment spans residues glutamine 22–methionine 786. Cadherin domains are found at residues proline 29 to glutamine 127, threonine 128 to proline 243, valine 244 to cysteine 339, leucine 340 to phenylalanine 448, glutamate 449 to phenylalanine 565, proline 566 to leucine 666, and alanine 667 to glycine 776. 7 N-linked (GlcNAc...) asparagine glycosylation sites follow: asparagine 148, asparagine 183, asparagine 249, asparagine 418, asparagine 545, asparagine 573, and asparagine 721. A helical transmembrane segment spans residues alanine 787–isoleucine 807. Over arginine 808–serine 827 the chain is Cytoplasmic.

As to expression, liver and intestine.

It is found in the cell membrane. Its function is as follows. Cadherins are calcium-dependent cell adhesion proteins. They preferentially interact with themselves in a homophilic manner in connecting cells; cadherins may thus contribute to the sorting of heterogeneous cell types. LI-cadherin may have a role in the morphological organization of liver and intestine. In Rattus norvegicus (Rat), this protein is Cadherin-17 (Cdh17).